Reading from the N-terminus, the 131-residue chain is Two-component response regulator ORR3 (131 aa).

Positions 12-129 (HVLAVDDSIV…DVSRLCNRVI (118 aa)) constitute a Response regulatory domain. 4-aspartylphosphate is present on Asp62.

The protein belongs to the ARR family. Type-A subfamily. Two-component system major event consists of a His-to-Asp phosphorelay between a sensor histidine kinase (HK) and a response regulator (RR). In plants, the His-to-Asp phosphorelay involves an additional intermediate named Histidine-containing phosphotransfer protein (HPt). This multistep phosphorelay consists of a His-Asp-His-Asp sequential transfer of a phosphate group between first a His and an Asp of the HK protein, followed by the transfer to a conserved His of the HPt protein and finally the transfer to an Asp in the receiver domain of the RR protein. As to expression, expressed in roots, mature leaves and flowers, and at low levels in shoots.

Its function is as follows. Functions as a response regulator involved in His-to-Asp phosphorelay signal transduction system. Phosphorylation of the Asp residue in the receiver domain activates the ability of the protein to promote the transcription of target genes. Type-A response regulators seem to act as negative regulators of the cytokinin signaling. This Oryza sativa subsp. indica (Rice) protein is Two-component response regulator ORR3.